Consider the following 227-residue polypeptide: Ion-translocating oxidoreductase complex subunit E (227 aa).

The next 5 helical transmembrane spans lie at 34–56, 68–88, 91–111, 127–147, and 181–201; these read AINA…TIIS, IPIY…LLHA, FNLY…CIIV, FFDG…VGSI, and TIIL…LIAI.

This sequence belongs to the NqrDE/RnfAE family. In terms of assembly, the complex is composed of six subunits: RnfA, RnfB, RnfC, RnfD, RnfE and RnfG.

Its subcellular location is the cell inner membrane. In terms of biological role, part of a membrane-bound complex that couples electron transfer with translocation of ions across the membrane. The chain is Ion-translocating oxidoreductase complex subunit E from Buchnera aphidicola subsp. Acyrthosiphon pisum (strain APS) (Acyrthosiphon pisum symbiotic bacterium).